The sequence spans 335 residues: Biotin synthase (335 aa).

Residues 43–269 enclose the Radical SAM core domain; it reads YFGKKVKLNM…INPTKEIRIA (227 aa). Residues Cys-61, Cys-65, and Cys-68 each contribute to the [4Fe-4S] cluster site. [2Fe-2S] cluster is bound by residues Cys-104, Cys-137, Cys-197, and Arg-267.

It belongs to the radical SAM superfamily. Biotin synthase family. As to quaternary structure, homodimer. It depends on [4Fe-4S] cluster as a cofactor. Requires [2Fe-2S] cluster as cofactor.

The catalysed reaction is (4R,5S)-dethiobiotin + (sulfur carrier)-SH + 2 reduced [2Fe-2S]-[ferredoxin] + 2 S-adenosyl-L-methionine = (sulfur carrier)-H + biotin + 2 5'-deoxyadenosine + 2 L-methionine + 2 oxidized [2Fe-2S]-[ferredoxin]. Its pathway is cofactor biosynthesis; biotin biosynthesis; biotin from 7,8-diaminononanoate: step 2/2. In terms of biological role, catalyzes the conversion of dethiobiotin (DTB) to biotin by the insertion of a sulfur atom into dethiobiotin via a radical-based mechanism. This is Biotin synthase from Staphylococcus aureus (strain USA300).